A 91-amino-acid polypeptide reads, in one-letter code: Small ribosomal subunit protein uS19 (91 aa).

It belongs to the universal ribosomal protein uS19 family.

Its function is as follows. Protein S19 forms a complex with S13 that binds strongly to the 16S ribosomal RNA. The polypeptide is Small ribosomal subunit protein uS19 (Synechococcus sp. (strain WH7803)).